The primary structure comprises 195 residues: MRVAEVTRNTSETQIRVSLNLDGTGRQKLASGVPFLDHMLDQIARHGMFDLEVEATGDTHIDDHHTVEDVGITLGQAVAKAIGDKKGITRYGHSYVPLDECLSRVVIDFSGRPGLEFHVPFTRARVGSFDVDLTIEFFRGFVNHAGVTLHIDNLRGINAHHQCETVFKAFGRALRMAVELDPRAANTIPSTKGTL.

This sequence belongs to the imidazoleglycerol-phosphate dehydratase family.

The protein resides in the cytoplasm. It carries out the reaction D-erythro-1-(imidazol-4-yl)glycerol 3-phosphate = 3-(imidazol-4-yl)-2-oxopropyl phosphate + H2O. Its pathway is amino-acid biosynthesis; L-histidine biosynthesis; L-histidine from 5-phospho-alpha-D-ribose 1-diphosphate: step 6/9. This is Imidazoleglycerol-phosphate dehydratase from Cupriavidus pinatubonensis (strain JMP 134 / LMG 1197) (Cupriavidus necator (strain JMP 134)).